The sequence spans 593 residues: V-type ATP synthase alpha chain (593 aa).

246-253 lines the ATP pocket; sequence GPFGAGKT.

The protein belongs to the ATPase alpha/beta chains family.

The enzyme catalyses ATP + H2O + 4 H(+)(in) = ADP + phosphate + 5 H(+)(out). Its function is as follows. Produces ATP from ADP in the presence of a proton gradient across the membrane. The V-type alpha chain is a catalytic subunit. The chain is V-type ATP synthase alpha chain from Protochlamydia amoebophila (strain UWE25).